The primary structure comprises 85 residues: Antitoxin VapB4 (85 aa).

Belongs to the phD/YefM antitoxin family. In terms of assembly, interacts with cognate toxin VapC4.

Functionally, antitoxin component of a type II toxin-antitoxin (TA) system. Antitoxin that counteracts the effect of the VapC4 toxin. In Mycobacterium tuberculosis (strain CDC 1551 / Oshkosh), this protein is Antitoxin VapB4 (vapB4).